A 449-amino-acid chain; its full sequence is 23S rRNA (uracil(1939)-C(5))-methyltransferase RlmD (449 aa).

The TRAM domain occupies 15–73 (KAIPAKNLTVTVTSLDPFGQGVARHEGKTVFVTGVLPGEQAEVQLTEDKRQFSHAKLKR). [4Fe-4S] cluster-binding residues include Cys-86, Cys-92, Cys-95, and Cys-173. S-adenosyl-L-methionine is bound by residues Gln-276, Phe-305, Asn-310, Glu-326, Asn-353, and Asp-374. The active-site Nucleophile is Cys-400.

The protein belongs to the class I-like SAM-binding methyltransferase superfamily. RNA M5U methyltransferase family. RlmD subfamily.

The enzyme catalyses uridine(1939) in 23S rRNA + S-adenosyl-L-methionine = 5-methyluridine(1939) in 23S rRNA + S-adenosyl-L-homocysteine + H(+). Its function is as follows. Catalyzes the formation of 5-methyl-uridine at position 1939 (m5U1939) in 23S rRNA. In Pectobacterium carotovorum subsp. carotovorum (strain PC1), this protein is 23S rRNA (uracil(1939)-C(5))-methyltransferase RlmD.